The following is a 314-amino-acid chain: DNA-directed RNA polymerase subunit alpha (314 aa).

The segment at 1-228 is alpha N-terminal domain (alpha-NTD); that stretch reads MIEFEKPNIH…EHLGLFMDIS (228 aa). The alpha C-terminal domain (alpha-CTD) stretch occupies residues 242–314; it reads PVAASASDSA…DMNLGFRKED (73 aa).

The protein belongs to the RNA polymerase alpha chain family. Homodimer. The RNAP catalytic core consists of 2 alpha, 1 beta, 1 beta' and 1 omega subunit. When a sigma factor is associated with the core the holoenzyme is formed, which can initiate transcription.

It catalyses the reaction RNA(n) + a ribonucleoside 5'-triphosphate = RNA(n+1) + diphosphate. Functionally, DNA-dependent RNA polymerase catalyzes the transcription of DNA into RNA using the four ribonucleoside triphosphates as substrates. The polypeptide is DNA-directed RNA polymerase subunit alpha (Leuconostoc mesenteroides subsp. mesenteroides (strain ATCC 8293 / DSM 20343 / BCRC 11652 / CCM 1803 / JCM 6124 / NCDO 523 / NBRC 100496 / NCIMB 8023 / NCTC 12954 / NRRL B-1118 / 37Y)).